The sequence spans 241 residues: Probable transcriptional regulatory protein LMOf2365_1554 (241 aa).

Over residues 1–14 (MSGHSKWNNIQGRK) the composition is skewed to polar residues. The interval 1–22 (MSGHSKWNNIQGRKNAQDSKRS) is disordered.

The protein belongs to the TACO1 family.

Its subcellular location is the cytoplasm. The polypeptide is Probable transcriptional regulatory protein LMOf2365_1554 (Listeria monocytogenes serotype 4b (strain F2365)).